The following is a 210-amino-acid chain: Peroxynitrite isomerase (210 aa).

Positions Gly21–Gly27 match the GXWXGXG motif. His190 serves as a coordination point for heme b.

This sequence belongs to the nitrobindin family. In terms of assembly, homodimer. The cofactor is heme b.

The catalysed reaction is peroxynitrite = nitrate. It participates in nitrogen metabolism. Heme-binding protein able to scavenge peroxynitrite and to protect free L-tyrosine against peroxynitrite-mediated nitration, by acting as a peroxynitrite isomerase that converts peroxynitrite to nitrate. Therefore, this protein likely plays a role in peroxynitrite sensing and in the detoxification of reactive nitrogen and oxygen species (RNS and ROS, respectively). Is able to bind nitric oxide (NO) in vitro, but may act as a sensor of peroxynitrite levels in vivo. This is Peroxynitrite isomerase from Renibacterium salmoninarum (strain ATCC 33209 / DSM 20767 / JCM 11484 / NBRC 15589 / NCIMB 2235).